A 409-amino-acid polypeptide reads, in one-letter code: Shaggy-related protein kinase gamma (409 aa).

The residue at position 2 (A2) is an N-acetylalanine. The Protein kinase domain maps to 73-357 (YMAERVVGHG…ALDSLVHPFF (285 aa)). Residues 79–87 (VGHGSFGVV) and K102 each bind ATP. The Proton acceptor role is filled by D198. Y233 bears the Phosphotyrosine mark.

Belongs to the protein kinase superfamily. CMGC Ser/Thr protein kinase family. GSK-3 subfamily. As to quaternary structure, binds to KIB1. Component of a complex made of POLAR, BASL, ASK7/BIN2 and ASK3/SK12. Binds to POLAR and BASL. In terms of processing, autophosphorylated mainly on threonine and serine residues. Roots, shoots and leaves.

Its subcellular location is the cytoplasm. It localises to the cell cortex. The catalysed reaction is L-seryl-[protein] + ATP = O-phospho-L-seryl-[protein] + ADP + H(+). The enzyme catalyses L-threonyl-[protein] + ATP = O-phospho-L-threonyl-[protein] + ADP + H(+). May mediate extracellular signals to regulate transcription in differentiating cells. Probably involved first at the cortical polarity site, to restrict MAPK signaling and promote asymmetric cell division (ACD), and second in the nucleus of stomatal lineage ground cells (SLGCs) or meristemoids, to limit cell division and to promote differentiation into pavement or stomatal guard cells, respectively. Phosphorylate YDA and SPCH in vitro. In Arabidopsis thaliana (Mouse-ear cress), this protein is Shaggy-related protein kinase gamma.